Consider the following 423-residue polypeptide: Serine--tRNA ligase (423 aa).

229–231 (TAE) lines the L-serine pocket. 260-262 (RKE) is a binding site for ATP. L-serine is bound at residue Glu-283. 347-350 (EVSS) serves as a coordination point for ATP. Residue Ser-383 coordinates L-serine.

The protein belongs to the class-II aminoacyl-tRNA synthetase family. Type-1 seryl-tRNA synthetase subfamily. In terms of assembly, homodimer. The tRNA molecule binds across the dimer.

Its subcellular location is the cytoplasm. It carries out the reaction tRNA(Ser) + L-serine + ATP = L-seryl-tRNA(Ser) + AMP + diphosphate + H(+). It catalyses the reaction tRNA(Sec) + L-serine + ATP = L-seryl-tRNA(Sec) + AMP + diphosphate + H(+). Its pathway is aminoacyl-tRNA biosynthesis; selenocysteinyl-tRNA(Sec) biosynthesis; L-seryl-tRNA(Sec) from L-serine and tRNA(Sec): step 1/1. In terms of biological role, catalyzes the attachment of serine to tRNA(Ser). Is also able to aminoacylate tRNA(Sec) with serine, to form the misacylated tRNA L-seryl-tRNA(Sec), which will be further converted into selenocysteinyl-tRNA(Sec). The sequence is that of Serine--tRNA ligase from Chloroflexus aurantiacus (strain ATCC 29366 / DSM 635 / J-10-fl).